The following is a 279-amino-acid chain: Large ribosomal subunit protein uL2 (279 aa).

The interval 216-279 (KRPSVRGVVM…IQKRKRNRNR (64 aa)) is disordered. The span at 270 to 279 (IQKRKRNRNR) shows a compositional bias: basic residues.

It belongs to the universal ribosomal protein uL2 family. In terms of assembly, part of the 50S ribosomal subunit. Forms a bridge to the 30S subunit in the 70S ribosome.

Functionally, one of the primary rRNA binding proteins. Required for association of the 30S and 50S subunits to form the 70S ribosome, for tRNA binding and peptide bond formation. It has been suggested to have peptidyltransferase activity; this is somewhat controversial. Makes several contacts with the 16S rRNA in the 70S ribosome. This chain is Large ribosomal subunit protein uL2, found in Leptospira interrogans serogroup Icterohaemorrhagiae serovar copenhageni (strain Fiocruz L1-130).